Consider the following 147-residue polypeptide: Cyanate hydratase (147 aa).

Residues Arg-88, Glu-91, and Ser-114 contribute to the active site.

The protein belongs to the cyanase family.

It carries out the reaction cyanate + hydrogencarbonate + 3 H(+) = NH4(+) + 2 CO2. Catalyzes the reaction of cyanate with bicarbonate to produce ammonia and carbon dioxide. The protein is Cyanate hydratase of Acaryochloris marina (strain MBIC 11017).